The primary structure comprises 85 residues: Conotoxin Vx15a (85 aa).

An N-terminal signal peptide occupies residues 1–23 (MEKLTVLILVATVLLTIQVLAQS). Residues 24 to 49 (DGDKHLMKRSKQYATKRLSALMRGHR) constitute a propeptide that is removed on maturation. Residue Gln50 is modified to Pyrrolidone carboxylic acid.

It belongs to the conotoxin O2 superfamily. Contains 4 disulfide bonds. In terms of tissue distribution, expressed by the venom duct.

The protein localises to the secreted. This chain is Conotoxin Vx15a, found in Conus vexillum (Flag cone).